The chain runs to 183 residues: Small ribosomal subunit protein uS4c (183 aa).

An S4 RNA-binding domain is found at methionine 82–asparagine 143.

This sequence belongs to the universal ribosomal protein uS4 family. Part of the 30S ribosomal subunit. Contacts protein S5. The interaction surface between S4 and S5 is involved in control of translational fidelity.

It localises to the plastid. The protein localises to the chloroplast. In terms of biological role, one of the primary rRNA binding proteins, it binds directly to 16S rRNA where it nucleates assembly of the body of the 30S subunit. Its function is as follows. With S5 and S12 plays an important role in translational accuracy. The sequence is that of Small ribosomal subunit protein uS4c (rps4) from Gladiolus communis (Cornflag).